The primary structure comprises 186 residues: Ribosome maturation factor RimP (186 aa).

This sequence belongs to the RimP family.

Its subcellular location is the cytoplasm. In terms of biological role, required for maturation of 30S ribosomal subunits. The protein is Ribosome maturation factor RimP of Rhizorhabdus wittichii (strain DSM 6014 / CCUG 31198 / JCM 15750 / NBRC 105917 / EY 4224 / RW1) (Sphingomonas wittichii).